A 537-amino-acid chain; its full sequence is Exodeoxyribonuclease 7 large subunit (537 aa).

A disordered region spans residues 508 to 537; sequence GEGAPVEPPQAARPSKGARTKAAQPSLFDD.

It belongs to the XseA family. In terms of assembly, heterooligomer composed of large and small subunits.

It localises to the cytoplasm. The enzyme catalyses Exonucleolytic cleavage in either 5'- to 3'- or 3'- to 5'-direction to yield nucleoside 5'-phosphates.. Bidirectionally degrades single-stranded DNA into large acid-insoluble oligonucleotides, which are then degraded further into small acid-soluble oligonucleotides. The protein is Exodeoxyribonuclease 7 large subunit of Azorhizobium caulinodans (strain ATCC 43989 / DSM 5975 / JCM 20966 / LMG 6465 / NBRC 14845 / NCIMB 13405 / ORS 571).